A 121-amino-acid chain; its full sequence is Large ribosomal subunit protein bL12 (121 aa).

Belongs to the bacterial ribosomal protein bL12 family. Homodimer. Part of the ribosomal stalk of the 50S ribosomal subunit. Forms a multimeric L10(L12)X complex, where L10 forms an elongated spine to which 2 to 4 L12 dimers bind in a sequential fashion. Binds GTP-bound translation factors.

Functionally, forms part of the ribosomal stalk which helps the ribosome interact with GTP-bound translation factors. Is thus essential for accurate translation. This chain is Large ribosomal subunit protein bL12, found in Pseudomonas savastanoi pv. phaseolicola (strain 1448A / Race 6) (Pseudomonas syringae pv. phaseolicola (strain 1448A / Race 6)).